The following is a 168-amino-acid chain: Lipoprotein signal peptidase (168 aa).

Transmembrane regions (helical) follow at residues 57–77 (PKEV…LYVF) and 86–106 (FILP…DRIT). Catalysis depends on residues Asp112 and Asp138. Residues 131–151 (WPIFNIADSAITIGACLLILF) traverse the membrane as a helical segment.

The protein belongs to the peptidase A8 family.

The protein localises to the cell inner membrane. The catalysed reaction is Release of signal peptides from bacterial membrane prolipoproteins. Hydrolyzes -Xaa-Yaa-Zaa-|-(S,diacylglyceryl)Cys-, in which Xaa is hydrophobic (preferably Leu), and Yaa (Ala or Ser) and Zaa (Gly or Ala) have small, neutral side chains.. The protein operates within protein modification; lipoprotein biosynthesis (signal peptide cleavage). This protein specifically catalyzes the removal of signal peptides from prolipoproteins. This chain is Lipoprotein signal peptidase, found in Chlorobium phaeobacteroides (strain DSM 266 / SMG 266 / 2430).